The following is a 519-amino-acid chain: Ribonuclease Y (519 aa).

Residues 6–26 (VPFYLLIFLVGIGLGVLTFWA) form a helical membrane-spanning segment. The KH domain maps to 209-272 (TVCTVTIPNE…HIAKMALTEL (64 aa)). The region spanning 335–428 (VLDHSLEVSH…CSAADAISAS (94 aa)) is the HD domain.

The protein belongs to the RNase Y family.

Its subcellular location is the cell membrane. In terms of biological role, endoribonuclease that initiates mRNA decay. This Protochlamydia amoebophila (strain UWE25) protein is Ribonuclease Y.